A 98-amino-acid chain; its full sequence is uncharacterized protein (98 aa).

The next 2 helical transmembrane spans lie at 2-22 and 70-90; these read IVTLLNALSAMAAFTAAGLWW and AAKAAALAAACQGTAIALPIL.

The protein localises to the cell membrane. This is an uncharacterized protein from Sinorhizobium fredii (strain NBRC 101917 / NGR234).